The following is a 265-amino-acid chain: Palmitoyltransferase ZDHHC21 (265 aa).

Topologically, residues 1-16 are cytoplasmic; it reads MGLRIHFVVDPHGWCC. The helical transmembrane segment at 17–37 threads the bilayer; that stretch reads MGLIVFVWLYNIVIIPKIVLF. The Extracellular segment spans residues 38 to 44; the sequence is PHYEEGH. The helical transmembrane segment at 45-65 threads the bilayer; that stretch reads IPGILIIIFYGISIFCLVALV. The Cytoplasmic segment spans residues 66 to 133; it reads RASLTDPGRL…NNCVGEDNHW (68 aa). Residues 90 to 140 form the DHHC domain; that stretch reads ELCNKCNLMRPKRSHHCSRCGHCVRRMDHHCPWINNCVGEDNHWLFLQLCF. Cysteine 120 acts as the S-palmitoyl cysteine intermediate in catalysis. Residues 134–154 traverse the membrane as a helical segment; that stretch reads LFLQLCFYTELLTCYALMFSF. Residues 155–185 lie on the Extracellular side of the membrane; it reads CHYYYFLPLKKRNLDLFVVRHELAIMRLAAF. The helical transmembrane segment at 186–206 threads the bilayer; the sequence is MGITMLVGITGLFYTQLIGII. Over 207 to 265 the chain is Cytoplasmic; it reads TDTTSIEKMSNCCEEISRPRKPWQQTFSEVFGTRWKILWFIPFRQRQPLRVPYHFANHV.

It belongs to the DHHC palmitoyltransferase family. In terms of tissue distribution, widely expressed. Expressed in Henle's layer within the hair bulb and the hair shaft cuticle (at protein level). Expression is limited to the post-mitotic lineages of inner root sheath (IRS) and cuticle.

Its subcellular location is the golgi apparatus membrane. It localises to the golgi apparatus. It is found in the cis-Golgi network membrane. The protein localises to the cell membrane. It carries out the reaction L-cysteinyl-[protein] + hexadecanoyl-CoA = S-hexadecanoyl-L-cysteinyl-[protein] + CoA. Its function is as follows. Palmitoyltransferase that catalyzes the addition of palmitate onto various protein substrates. Palmitoylates sex steroid hormone receptors, including ESR1, PGR and AR, thereby regulating their targeting to the plasma membrane. This affects rapid intracellular signaling by sex hormones via ERK and AKT kinases and the generation of cAMP, but does not affect that mediated by their nuclear receptor. Palmitoylates FYN, regulates its localization in hair follicles and plays a key role in epidermal homeostasis and hair follicle differentiation. Through the palmitoylation of PLCB1 and the regulation of PLCB1 downstream signaling may indirectly regulate the function of the endothelial barrier and the adhesion of leukocytes to the endothelium. Also has a palmitoyltransferase activity toward ADRA1D, positively regulating its activity and expression and may thereby play a role in vascular contraction. May also palmitoylate eNOS and LCK. This Mus musculus (Mouse) protein is Palmitoyltransferase ZDHHC21.